The primary structure comprises 364 residues: Aminomethyltransferase (364 aa).

Belongs to the GcvT family. In terms of assembly, the glycine cleavage system is composed of four proteins: P, T, L and H.

It carries out the reaction N(6)-[(R)-S(8)-aminomethyldihydrolipoyl]-L-lysyl-[protein] + (6S)-5,6,7,8-tetrahydrofolate = N(6)-[(R)-dihydrolipoyl]-L-lysyl-[protein] + (6R)-5,10-methylene-5,6,7,8-tetrahydrofolate + NH4(+). Functionally, the glycine cleavage system catalyzes the degradation of glycine. This Staphylococcus carnosus (strain TM300) protein is Aminomethyltransferase.